The sequence spans 91 residues: Small ribosomal subunit protein uS17 (91 aa).

This sequence belongs to the universal ribosomal protein uS17 family. Part of the 30S ribosomal subunit.

In terms of biological role, one of the primary rRNA binding proteins, it binds specifically to the 5'-end of 16S ribosomal RNA. This is Small ribosomal subunit protein uS17 from Psychrobacter cryohalolentis (strain ATCC BAA-1226 / DSM 17306 / VKM B-2378 / K5).